We begin with the raw amino-acid sequence, 506 residues long: Maturase K (506 aa).

It belongs to the intron maturase 2 family. MatK subfamily.

The protein localises to the plastid. Its subcellular location is the chloroplast. Its function is as follows. Usually encoded in the trnK tRNA gene intron. Probably assists in splicing its own and other chloroplast group II introns. The sequence is that of Maturase K from Lathyrus aphaca (Yellow vetchling).